A 505-amino-acid chain; its full sequence is Glycerol kinase (505 aa).

An ADP-binding site is contributed by threonine 17. ATP is bound by residues threonine 17, threonine 18, and serine 19. Threonine 17 is a binding site for sn-glycerol 3-phosphate. Arginine 21 contributes to the ADP binding site. Sn-glycerol 3-phosphate is bound by residues arginine 87, glutamate 88, tyrosine 139, and aspartate 250. Residues arginine 87, glutamate 88, tyrosine 139, aspartate 250, and glutamine 251 each coordinate glycerol. The ADP site is built by threonine 272 and glycine 315. Residues threonine 272, glycine 315, glutamine 319, and glycine 416 each contribute to the ATP site. ADP contacts are provided by glycine 416 and asparagine 420.

This sequence belongs to the FGGY kinase family.

The catalysed reaction is glycerol + ATP = sn-glycerol 3-phosphate + ADP + H(+). The protein operates within polyol metabolism; glycerol degradation via glycerol kinase pathway; sn-glycerol 3-phosphate from glycerol: step 1/1. Its activity is regulated as follows. Inhibited by fructose 1,6-bisphosphate (FBP). Its function is as follows. Key enzyme in the regulation of glycerol uptake and metabolism. Catalyzes the phosphorylation of glycerol to yield sn-glycerol 3-phosphate. In Azotobacter vinelandii (strain DJ / ATCC BAA-1303), this protein is Glycerol kinase.